We begin with the raw amino-acid sequence, 412 residues long: Delta-aminolevulinic acid dehydratase, chloroplastic (412 aa).

Residues 1–48 (MASSIPNAPSAFNSQSYVGLRAPLRTFNFSSPQAAKIPRSQRLFVVRA) constitute a chloroplast transit peptide. Positions 68–101 (VRPRPAAPVGTPVVPSLPLHRRPRRNRKSPALRS) are disordered. Residues 86–97 (LHRRPRRNRKSP) show a composition bias toward basic residues. Lysine 280 acts as the Schiff-base intermediate with substrate in catalysis. 5-aminolevulinate is bound by residues arginine 290 and lysine 302. Glutamate 318 is a Mg(2+) binding site. Lysine 333 functions as the Schiff-base intermediate with substrate in the catalytic mechanism. 5-aminolevulinate-binding residues include serine 359 and tyrosine 398.

This sequence belongs to the ALAD family. As to quaternary structure, homooctamer. Requires Mg(2+) as cofactor. In terms of tissue distribution, leaves and root nodules.

The protein localises to the plastid. It is found in the chloroplast. It carries out the reaction 2 5-aminolevulinate = porphobilinogen + 2 H2O + H(+). It functions in the pathway porphyrin-containing compound metabolism; protoporphyrin-IX biosynthesis; coproporphyrinogen-III from 5-aminolevulinate: step 1/4. In terms of biological role, is committed to plant tetrapyrrole synthesis. Functionally, catalyzes an early step in the biosynthesis of tetrapyrroles. Binds two molecules of 5-aminolevulinate per subunit, each at a distinct site, and catalyzes their condensation to form porphobilinogen. This chain is Delta-aminolevulinic acid dehydratase, chloroplastic (HEMB), found in Glycine max (Soybean).